The sequence spans 172 residues: Zinc finger C2HC domain-containing protein 1B (172 aa).

C2HC/C3H-type zinc fingers lie at residues 14–43 and 117–146; these read KLFP…VFNK and DYIQ…QTSR. The Zn(2+) site is built by Cys-18, Cys-21, His-33, Cys-37, Cys-121, Cys-124, His-136, and Cys-140.

It belongs to the ZC2HC1 family. Requires Zn(2+) as cofactor.

This Mus musculus (Mouse) protein is Zinc finger C2HC domain-containing protein 1B (Zc2hc1b).